The following is a 109-amino-acid chain: Aquaporin-2 (109 aa).

The Cytoplasmic portion of the chain corresponds to 1–6 (SIAFSR). A helical transmembrane segment spans residues 7-27 (AVFAEFLATLLFVFFGLGSAL). The Extracellular portion of the chain corresponds to 28–35 (NWPSALPS). A helical transmembrane segment spans residues 36–54 (TLQIAMAFGLGIGTLVQAL). Over 55–59 (GHVSG) the chain is Cytoplasmic. The discontinuously helical intramembrane region spans 60-69 (AHINPAVTVA). The NPA 1 signature appears at 63–65 (NPA). Residues 70–80 (CLVGCHVSFLR) are Cytoplasmic-facing. The chain crosses the membrane as a helical span at residues 81–102 (AAFYVAAQLLGAVAGAALLHEI). At 103-109 (TPAEVRG) the chain is on the extracellular side.

It belongs to the MIP/aquaporin (TC 1.A.8) family. As to quaternary structure, homotetramer. In terms of processing, serine phosphorylation is necessary and sufficient for expression at the apical membrane. Endocytosis is not phosphorylation-dependent. N-glycosylated.

It localises to the apical cell membrane. The protein localises to the basolateral cell membrane. Its subcellular location is the cell membrane. The protein resides in the cytoplasmic vesicle membrane. It is found in the golgi apparatus. It localises to the trans-Golgi network membrane. It catalyses the reaction H2O(in) = H2O(out). It carries out the reaction glycerol(in) = glycerol(out). Its function is as follows. Forms a water-specific channel that provides the plasma membranes of renal collecting duct with high permeability to water, thereby permitting water to move in the direction of an osmotic gradient. Plays an essential role in renal water homeostasis. Could also be permeable to glycerol. The polypeptide is Aquaporin-2 (Oryctolagus cuniculus (Rabbit)).